We begin with the raw amino-acid sequence, 430 residues long: tRNA(Ile)-lysidine synthase (430 aa).

24-29 (SGGLDS) serves as a coordination point for ATP.

It belongs to the tRNA(Ile)-lysidine synthase family.

The protein localises to the cytoplasm. The catalysed reaction is cytidine(34) in tRNA(Ile2) + L-lysine + ATP = lysidine(34) in tRNA(Ile2) + AMP + diphosphate + H(+). In terms of biological role, ligates lysine onto the cytidine present at position 34 of the AUA codon-specific tRNA(Ile) that contains the anticodon CAU, in an ATP-dependent manner. Cytidine is converted to lysidine, thus changing the amino acid specificity of the tRNA from methionine to isoleucine. The chain is tRNA(Ile)-lysidine synthase from Haemophilus influenzae (strain 86-028NP).